A 645-amino-acid polypeptide reads, in one-letter code: Threonine--tRNA ligase (645 aa).

The TGS domain maps to 1 to 63 (MEQINIQFPD…ETDGSIEIVT (63 aa)). The interval 242–540 (DHRKIGKELE…LTEETKGAFP (299 aa)) is catalytic. Zn(2+) is bound by residues Cys336, His387, and His517.

Belongs to the class-II aminoacyl-tRNA synthetase family. As to quaternary structure, homodimer. Zn(2+) serves as cofactor.

It is found in the cytoplasm. The enzyme catalyses tRNA(Thr) + L-threonine + ATP = L-threonyl-tRNA(Thr) + AMP + diphosphate + H(+). Functionally, catalyzes the attachment of threonine to tRNA(Thr) in a two-step reaction: L-threonine is first activated by ATP to form Thr-AMP and then transferred to the acceptor end of tRNA(Thr). Also edits incorrectly charged L-seryl-tRNA(Thr). The chain is Threonine--tRNA ligase from Staphylococcus aureus (strain bovine RF122 / ET3-1).